Consider the following 833-residue polypeptide: MSTYNHREIEPKWQKYWAEHHTFKTGTDKDKPNFYALDMFPYPSGAGLHVGHPEGYTATDILSRYKRAQGYNVLHPMGWDAFGLPAEQYAMDTGNDPADFTAENIANFKRQINALGFSYDWDREVNTTDPNYYKWTQWIFTKLYEKGLAYEAEVPVNWVEELGTAIANEEVLPDGTSERGGYPVVRKPMRQWMLKITAYAERLLNDLEELDWPESIKDMQRNWIGKSTGANVTFKIKDTDKDFTVFTTRPDTLFGATYAVLAPEHALVDVITSAEQAQAVADYKHAASLKSDLARTDLAKEKTGVWTGAYAINPVNGKEIPIWIADYVLASYGTGAIMAVPAHDERDWEFAKQFDLEIIPVLEGGNVADAAYTEDGPHINSGFLDGLDKAAAIEKMVAWLEKEGVGNEKVTYRLRDWLFSRQRYWGEPIPIIHWEDGTSTAVPESELPLVLPVTKDIRPSGTGESPLANLTDWLEVTREDGVKGRRETNTMPQWAGSSWYYLRYIDPHNNEKLADEDLLKAWLPVDIYIGGAEHAVLHLLYARFWHKFLYDLGVVPTKEPFQKLFNQGMILGTSYRDHRGALVATDKVEKRDGSFFNIETGEELEQAPAKMSKSLKNVVNPDDVVEQYGADTLRVYEMFMGPLDASIAWSEEGLEGSRKFLDRVYRLLNTKELVTENSGALDKVYHETVKSVTEQLEELKFNTAIAQLMIFVNAANKEEKLYVEYAKGFIQLLAPFAPHLAEELWQAVAQTDESISYVAWPTYDESKLVEAEVEIVVQIKGKVRAKLVVAKDLSREELQEIALADEKIKSEIADKEVVKVISVPNKLVNIVVK.

The short motif at proline 41 to histidine 52 is the 'HIGH' region element. Residues lysine 610–serine 614 carry the 'KMSKS' region motif. Residue lysine 613 participates in ATP binding.

This sequence belongs to the class-I aminoacyl-tRNA synthetase family.

It localises to the cytoplasm. The enzyme catalyses tRNA(Leu) + L-leucine + ATP = L-leucyl-tRNA(Leu) + AMP + diphosphate. This is Leucine--tRNA ligase from Streptococcus gordonii (strain Challis / ATCC 35105 / BCRC 15272 / CH1 / DL1 / V288).